Consider the following 202-residue polypeptide: Peptide deformylase 2 (202 aa).

2 residues coordinate Fe cation: cysteine 120 and histidine 162. Glutamate 163 is an active-site residue. Histidine 166 contributes to the Fe cation binding site.

The protein belongs to the polypeptide deformylase family. Fe(2+) serves as cofactor.

It catalyses the reaction N-terminal N-formyl-L-methionyl-[peptide] + H2O = N-terminal L-methionyl-[peptide] + formate. Its function is as follows. Removes the formyl group from the N-terminal Met of newly synthesized proteins. Requires at least a dipeptide for an efficient rate of reaction. N-terminal L-methionine is a prerequisite for activity but the enzyme has broad specificity at other positions. This is Peptide deformylase 2 from Rickettsia conorii (strain ATCC VR-613 / Malish 7).